A 421-amino-acid polypeptide reads, in one-letter code: Meiotic fizzy-related protein 1 (421 aa).

The segment at 79–107 (DTPDRKSYSLSPISPQSQDMLRQPQKPKR) is disordered. Polar residues predominate over residues 86–98 (YSLSPISPQSQDM). WD repeat units lie at residues 123–160 (KNDF…VVQL), 164–203 (GATN…SVRS), 206–246 (GHSE…EMMK), 247–286 (VHEQ…PLHK), 289–331 (EHTA…LQNK), 333–374 (DTGS…NIAN), and 377–416 (AHTN…PKEE).

This sequence belongs to the WD repeat CDC20/Fizzy family. As to quaternary structure, interacts with mes1.

Its subcellular location is the nucleus. Functionally, meiosis-specific activator of the anaphase promoting complex/cyclosome (APC/C). Involved in cdc13 degradation. This chain is Meiotic fizzy-related protein 1 (mfr1), found in Schizosaccharomyces pombe (strain 972 / ATCC 24843) (Fission yeast).